Reading from the N-terminus, the 618-residue chain is Glucose starvation modulator protein 1 (618 aa).

Positions 20-48 (CEFCHTKHIQCDVGRPCQNCLKRNIGKFC) form a DNA-binding region, zn(2)-C6 fungal-type. Residues 325–353 (ANANTQPSHNAKLESECDSSSHSDADLEK) are disordered. A compositionally biased stretch (basic and acidic residues) spans 335 to 353 (AKLESECDSSSHSDADLEK). The PAS domain maps to 466 to 538 (LLDLENMAKL…QIFNELLAFG (73 aa)).

It belongs to the ERT1/acuK family.

Its subcellular location is the nucleus. Its function is as follows. Transcription factor which regulates nonfermentable carbon utilization. Binds specifically to 5'-CGGN(8)CGG-3' and 5'-CGGN(9)CGG-3' sequences in the promoter region. The protein is Glucose starvation modulator protein 1 (GSM1) of Saccharomyces cerevisiae (strain JAY291) (Baker's yeast).